We begin with the raw amino-acid sequence, 182 residues long: uncharacterized protein (182 aa).

The interval 40–182 (LLKTDDDDDD…EEIQRNQKGN (143 aa)) is disordered. Low complexity predominate over residues 52-86 (NNININNNNATITTTSTTTTTTTTSTTKTFTISTD). Residues 87-100 (NYDEDVNDDQDEGD) are compositionally biased toward acidic residues. 2 stretches are compositionally biased toward low complexity: residues 104-134 (NNNN…NNNN) and 148-157 (DLDFNNQNNN). Over residues 165–182 (FLSKDDNIEEIQRNQKGN) the composition is skewed to basic and acidic residues.

This is an uncharacterized protein from Dictyostelium discoideum (Social amoeba).